An 874-amino-acid polypeptide reads, in one-letter code: Alanine--tRNA ligase (874 aa).

Zn(2+)-binding residues include histidine 564, histidine 568, cysteine 665, and histidine 669.

The protein belongs to the class-II aminoacyl-tRNA synthetase family. Zn(2+) is required as a cofactor.

It is found in the cytoplasm. The catalysed reaction is tRNA(Ala) + L-alanine + ATP = L-alanyl-tRNA(Ala) + AMP + diphosphate. In terms of biological role, catalyzes the attachment of alanine to tRNA(Ala) in a two-step reaction: alanine is first activated by ATP to form Ala-AMP and then transferred to the acceptor end of tRNA(Ala). Also edits incorrectly charged Ser-tRNA(Ala) and Gly-tRNA(Ala) via its editing domain. This Delftia acidovorans (strain DSM 14801 / SPH-1) protein is Alanine--tRNA ligase.